Here is a 185-residue protein sequence, read N- to C-terminus: Urease accessory protein UreE (185 aa).

The interval 153–185 (LRANSAQGHGHSHSHSHDHHGYHHHGDGHWHKH) is disordered. Residues 162–175 (GHSHSHSHDHHGYH) are compositionally biased toward basic residues. The segment covering 176-185 (HHGDGHWHKH) has biased composition (basic and acidic residues).

Belongs to the UreE family.

Its subcellular location is the cytoplasm. Its function is as follows. Involved in urease metallocenter assembly. Binds nickel. Probably functions as a nickel donor during metallocenter assembly. In Haemophilus influenzae (strain 86-028NP), this protein is Urease accessory protein UreE.